Consider the following 318-residue polypeptide: Bis(5'-nucleosyl)-tetraphosphatase, symmetrical (318 aa).

The segment at 269–318 (PGREVTGPAPVARAPRRPRERQGRQRSRGNRGNAGNAAAGPKPSVDTPQD) is disordered. Over residues 282 to 297 (APRRPRERQGRQRSRG) the composition is skewed to basic residues. Low complexity predominate over residues 298 to 311 (NRGNAGNAAAGPKP).

Belongs to the Ap4A hydrolase family.

It catalyses the reaction P(1),P(4)-bis(5'-adenosyl) tetraphosphate + H2O = 2 ADP + 2 H(+). Hydrolyzes diadenosine 5',5'''-P1,P4-tetraphosphate to yield ADP. The protein is Bis(5'-nucleosyl)-tetraphosphatase, symmetrical of Xanthomonas euvesicatoria pv. vesicatoria (strain 85-10) (Xanthomonas campestris pv. vesicatoria).